Reading from the N-terminus, the 222-residue chain is MADS-box transcription factor 26 (222 aa).

Residues 1–61 form the MADS-box domain; sequence MARGKVQLRR…GKLYDLATTG (61 aa). The 92-residue stretch at 85–176 folds into the K-box domain; sequence RMDPKQEAMV…QEKIVEQNGL (92 aa).

Its subcellular location is the nucleus. Probable transcription factor. The polypeptide is MADS-box transcription factor 26 (MADS26) (Oryza sativa subsp. indica (Rice)).